A 335-amino-acid polypeptide reads, in one-letter code: Holliday junction branch migration complex subunit RuvB (335 aa).

Residues 4 to 184 (ADRIISSNAQ…FGIVQRLEFY (181 aa)) form a large ATPase domain (RuvB-L) region. ATP contacts are provided by residues I23, R24, G65, K68, T69, T70, 131 to 133 (EDY), R174, Y184, and R221. Residue T69 participates in Mg(2+) binding. Positions 185–255 (SVEDLTSIVA…IAKSALSMLD (71 aa)) are small ATPAse domain (RuvB-S). The tract at residues 258–335 (QAGFDYLDRK…RHFGLDKLTE (78 aa)) is head domain (RuvB-H). Residues R294, R313, and R318 each coordinate DNA.

The protein belongs to the RuvB family. As to quaternary structure, homohexamer. Forms an RuvA(8)-RuvB(12)-Holliday junction (HJ) complex. HJ DNA is sandwiched between 2 RuvA tetramers; dsDNA enters through RuvA and exits via RuvB. An RuvB hexamer assembles on each DNA strand where it exits the tetramer. Each RuvB hexamer is contacted by two RuvA subunits (via domain III) on 2 adjacent RuvB subunits; this complex drives branch migration. In the full resolvosome a probable DNA-RuvA(4)-RuvB(12)-RuvC(2) complex forms which resolves the HJ.

Its subcellular location is the cytoplasm. It catalyses the reaction ATP + H2O = ADP + phosphate + H(+). The RuvA-RuvB-RuvC complex processes Holliday junction (HJ) DNA during genetic recombination and DNA repair, while the RuvA-RuvB complex plays an important role in the rescue of blocked DNA replication forks via replication fork reversal (RFR). RuvA specifically binds to HJ cruciform DNA, conferring on it an open structure. The RuvB hexamer acts as an ATP-dependent pump, pulling dsDNA into and through the RuvAB complex. RuvB forms 2 homohexamers on either side of HJ DNA bound by 1 or 2 RuvA tetramers; 4 subunits per hexamer contact DNA at a time. Coordinated motions by a converter formed by DNA-disengaged RuvB subunits stimulates ATP hydrolysis and nucleotide exchange. Immobilization of the converter enables RuvB to convert the ATP-contained energy into a lever motion, pulling 2 nucleotides of DNA out of the RuvA tetramer per ATP hydrolyzed, thus driving DNA branch migration. The RuvB motors rotate together with the DNA substrate, which together with the progressing nucleotide cycle form the mechanistic basis for DNA recombination by continuous HJ branch migration. Branch migration allows RuvC to scan DNA until it finds its consensus sequence, where it cleaves and resolves cruciform DNA. This is Holliday junction branch migration complex subunit RuvB from Mannheimia succiniciproducens (strain KCTC 0769BP / MBEL55E).